Consider the following 482-residue polypeptide: ATP synthase subunit beta (482 aa).

Position 161 to 168 (Gly-161 to Thr-168) interacts with ATP.

The protein belongs to the ATPase alpha/beta chains family. As to quaternary structure, F-type ATPases have 2 components, CF(1) - the catalytic core - and CF(0) - the membrane proton channel. CF(1) has five subunits: alpha(3), beta(3), gamma(1), delta(1), epsilon(1). CF(0) has four main subunits: a(1), b(1), b'(1) and c(9-12).

It is found in the cellular thylakoid membrane. It catalyses the reaction ATP + H2O + 4 H(+)(in) = ADP + phosphate + 5 H(+)(out). Functionally, produces ATP from ADP in the presence of a proton gradient across the membrane. The catalytic sites are hosted primarily by the beta subunits. The sequence is that of ATP synthase subunit beta from Gloeothece citriformis (strain PCC 7424) (Cyanothece sp. (strain PCC 7424)).